Here is a 538-residue protein sequence, read N- to C-terminus: Eukaryotic translation initiation factor 3 subunit L (538 aa).

The PCI domain occupies 305-513 (TFSDILLYIQ…IHIADTKVSH (209 aa)).

Belongs to the eIF-3 subunit L family. As to quaternary structure, component of the eukaryotic translation initiation factor 3 (eIF-3) complex. The eIF-3 complex interacts with pix.

Its subcellular location is the cytoplasm. Its function is as follows. Component of the eukaryotic translation initiation factor 3 (eIF-3) complex, which is involved in protein synthesis of a specialized repertoire of mRNAs and, together with other initiation factors, stimulates binding of mRNA and methionyl-tRNAi to the 40S ribosome. The eIF-3 complex specifically targets and initiates translation of a subset of mRNAs involved in cell proliferation. The protein is Eukaryotic translation initiation factor 3 subunit L of Drosophila mojavensis (Fruit fly).